We begin with the raw amino-acid sequence, 748 residues long: ATP-dependent rRNA helicase SPB4 (748 aa).

The Q motif motif lies at 15 to 43 (WAKLNPPLSPWILDVINSMGFKNMTPVQA). The 215-residue stretch at 46–260 (IPRAVKNQDC…GLGLRNPVRI (215 aa)) folds into the Helicase ATP-binding domain. 59 to 66 (AVTGSGKT) is a binding site for ATP. The interval 119–156 (ESEEETGDVEAHAPPFASSSRSPSPQTPDKPLFPLPML) is disordered. Residues 132–142 (PPFASSSRSPS) are compositionally biased toward low complexity. Positions 143-152 (PQTPDKPLFP) are enriched in pro residues. The DEAD box signature appears at 207–210 (DEAD). The 166-residue stretch at 295–460 (KTLQLIRLLL…KAQRSILDFL (166 aa)) folds into the Helicase C-terminal domain. A disordered region spans residues 614 to 748 (AQRADNQSSN…IGGGMFDDLE (135 aa)). Basic and acidic residues-rich tracts occupy residues 626 to 669 (ARAE…KYEW) and 708 to 730 (EIGK…KESS). Residues 732–748 (GGAGGGGIGGGMFDDLE) show a composition bias toward gly residues.

It belongs to the DEAD box helicase family. DDX55/SPB4 subfamily. In terms of assembly, component of pre-60S ribosomal complexes.

It is found in the nucleus. The protein localises to the nucleolus. It catalyses the reaction ATP + H2O = ADP + phosphate + H(+). ATP-binding RNA helicase involved in the biogenesis of 60S ribosomal subunits. Binds 90S pre-ribosomal particles and dissociates from pre-60S ribosomal particles after processing of 27SB pre-rRNA. Required for the normal formation of 18S rRNA through the processing of pre-rRNAs at sites A0, A1 and A2, and the normal formation of 25S and 5.8S rRNAs through the processing of pre-rRNAs at sites C1 and C2. The chain is ATP-dependent rRNA helicase SPB4 from Cryptococcus neoformans var. neoformans serotype D (strain B-3501A) (Filobasidiella neoformans).